Consider the following 349-residue polypeptide: Dihydroorotate dehydrogenase (quinone) (349 aa).

Residues 67–71 (AGLDK) and Thr-91 each bind FMN. A substrate-binding site is contributed by Lys-71. 116-120 (NRLGF) is a substrate binding site. FMN contacts are provided by Asn-147 and Asn-180. Substrate is bound at residue Asn-180. Ser-183 (nucleophile) is an active-site residue. Asn-185 provides a ligand contact to substrate. 2 residues coordinate FMN: Lys-225 and Thr-253. Residue 254-255 (NT) coordinates substrate. Residues Gly-276, Gly-305, and 326–327 (YT) contribute to the FMN site.

It belongs to the dihydroorotate dehydrogenase family. Type 2 subfamily. Monomer. It depends on FMN as a cofactor.

Its subcellular location is the cell membrane. The enzyme catalyses (S)-dihydroorotate + a quinone = orotate + a quinol. It participates in pyrimidine metabolism; UMP biosynthesis via de novo pathway; orotate from (S)-dihydroorotate (quinone route): step 1/1. Functionally, catalyzes the conversion of dihydroorotate to orotate with quinone as electron acceptor. This is Dihydroorotate dehydrogenase (quinone) from Bordetella parapertussis (strain 12822 / ATCC BAA-587 / NCTC 13253).